A 354-amino-acid chain; its full sequence is Kelch domain-containing protein 8B (354 aa).

Kelch repeat units lie at residues 1–31 (MSAG…HQDG), 32–79 (HLLV…VLGK), 81–127 (VLVV…ERDG), 128–175 (MVYA…LHGN), 176–222 (KIYV…MAEG), 224–281 (VFSL…SLGG), 282–329 (HIVA…QAGP), and 331–354 (LFVI…RDGV).

It localises to the cytoplasm. The protein localises to the midbody. Its function is as follows. Involved in pinching off the separated nuclei at the cleavage furrow and in cytokinesis. Required for mitotic integrity and maintenance of chromosomal stability. Protects cells against mitotic errors, centrosomal amplification, micronucleus formation and aneuploidy. Plays a key role of midbody function involving abscission of the daughter cells during cytokinesis and appropriate chromosomal and nuclear segregation into the daughter cells. This chain is Kelch domain-containing protein 8B, found in Homo sapiens (Human).